Reading from the N-terminus, the 534-residue chain is Probable inorganic phosphate transporter 1-8 (534 aa).

Residues 1 to 21 (MPIKVLSSLDVARTQWYHFKA) are Cytoplasmic-facing. The helical transmembrane segment at 22-42 (IIVAGMGLFTDAYDLFCIAPV) threads the bilayer. The Extracellular segment spans residues 43–61 (MKMISHVYYNGDSINTAVL). The helical transmembrane segment at 62–82 (STSYAIALLGTATGQLVFGYL) threads the bilayer. Over 83–90 (GDRVGRRR) the chain is Cytoplasmic. A helical membrane pass occupies residues 91 to 111 (VYGLCLIIMILSSFGCGFSVC). The Extracellular portion of the chain corresponds to 112–123 (TTRRSCVMVSLG). Residues 124-144 (FFRFFLGLGIGGDYPLSATIM) form a helical membrane-spanning segment. Residues 145–153 (SEFANKRTR) lie on the Cytoplasmic side of the membrane. The helical transmembrane segment at 154–174 (GAFIAAVFSMQGLGILVSSAV) threads the bilayer. Topologically, residues 175 to 199 (TMAVCVAFKRSGGGLEVDAAAPTEA) are extracellular. A helical transmembrane segment spans residues 200 to 220 (DLAWRLILMIGALPAALTFYW). Residues 221–281 (RMLMPETARY…KLFSRCFFRL (61 aa)) lie on the Cytoplasmic side of the membrane. The helical transmembrane segment at 282–302 (HGRDLFAASFNWFLVDIVFYT) threads the bilayer. Residues 303-333 (SNLLLSHIFSHYSKKPSTAENVYDAAFEVAE) lie on the Extracellular side of the membrane. The helical transmembrane segment at 334-354 (LGAIIAACSTIPGYWFTVYFI) threads the bilayer. The Cytoplasmic portion of the chain corresponds to 355–361 (DKIGRVK). A helical membrane pass occupies residues 362-382 (IQIMGFFFMAVIYLVAGIPYS). The Extracellular segment spans residues 383 to 396 (WYWSKHEHNNKGFM). Residues 397-417 (VLYGLVFFFCNFGPNTTTFII) traverse the membrane as a helical segment. Residues 418–431 (PAEHFPARFRSTCH) are Cytoplasmic-facing. Residues 432–452 (GISGAAGKLGAIVGTVGFLWA) form a helical membrane-spanning segment. Topologically, residues 453-472 (TKKMESDDKNQIYPEVNRMR) are extracellular. The chain crosses the membrane as a helical span at residues 473 to 493 (IAFLILGGVCIAGILVTYFFT). Residues 494–534 (KETMGRSLEENEHDQDNNAESEDEPQIVDGQSSVSTLLQTR) lie on the Cytoplasmic side of the membrane. The tract at residues 501–534 (LEENEHDQDNNAESEDEPQIVDGQSSVSTLLQTR) is disordered. Positions 510–519 (NNAESEDEPQ) are enriched in acidic residues. The residue at position 514 (S514) is a Phosphoserine. Polar residues predominate over residues 522 to 534 (DGQSSVSTLLQTR).

The protein belongs to the major facilitator superfamily. Phosphate:H(+) symporter (TC 2.A.1.9) family. In roots.

Its subcellular location is the membrane. Functionally, high-affinity transporter for external inorganic phosphate. In Arabidopsis thaliana (Mouse-ear cress), this protein is Probable inorganic phosphate transporter 1-8 (PHT1-8).